Reading from the N-terminus, the 254-residue chain is Ornithine decarboxylase antizyme (254 aa).

Belongs to the ODC antizyme family. In terms of assembly, interacts with ODC1 and thereby sterically blocks ODC homodimerization.

Its function is as follows. Ornithine decarboxylase (ODC) antizyme protein that negatively regulates ODC activity and intracellular polyamine biosynthesis and uptake in response to increased intracellular polyamine levels. Binds to ODC monomers, inhibiting the assembly of the functional ODC homodimer, and targets the monomers for ubiquitin-independent proteolytic destruction by the 26S proteasome. Required for cellular differentiation in neuronal and myogenic lineages during embryonic development. This is Ornithine decarboxylase antizyme (Oda) from Drosophila melanogaster (Fruit fly).